Here is a 123-residue protein sequence, read N- to C-terminus: Large ribosomal subunit protein eL8 (123 aa).

Belongs to the eukaryotic ribosomal protein eL8 family. In terms of assembly, part of the 50S ribosomal subunit. Probably part of the RNase P complex.

The protein localises to the cytoplasm. Its function is as follows. Multifunctional RNA-binding protein that recognizes the K-turn motif in ribosomal RNA, the RNA component of RNase P, box H/ACA, box C/D and box C'/D' sRNAs. The polypeptide is Large ribosomal subunit protein eL8 (Methanobrevibacter smithii (strain ATCC 35061 / DSM 861 / OCM 144 / PS)).